A 402-amino-acid polypeptide reads, in one-letter code: Putative PDZ domain-containing protein PDZK1P1 (402 aa).

PDZ domains lie at 12-93 (RLCY…VDKE) and 121-206 (IVEM…VDKE). A disordered region spans residues 230–258 (GSVKEAPAPTPTSLEVSSPPDTTEEEDHK). Over residues 240-250 (PTSLEVSSPPD) the composition is skewed to polar residues. The region spanning 261-341 (LCRLAKGENG…NVTLLVCGKK (81 aa)) is the PDZ 3 domain. A disordered region spans residues 362–402 (DTPPDSKEGIVVESKHDSHMAKERAHSTASHSSSNSEDTEM). Over residues 365 to 387 (PDSKEGIVVESKHDSHMAKERAH) the composition is skewed to basic and acidic residues. Low complexity predominate over residues 388 to 402 (STASHSSSNSEDTEM).

The protein belongs to the NHER family.

The sequence is that of Putative PDZ domain-containing protein PDZK1P1 from Homo sapiens (Human).